We begin with the raw amino-acid sequence, 431 residues long: Glutamate-1-semialdehyde 2,1-aminomutase 2 (431 aa).

Lys-268 carries the N6-(pyridoxal phosphate)lysine modification.

The protein belongs to the class-III pyridoxal-phosphate-dependent aminotransferase family. HemL subfamily. As to quaternary structure, homodimer. It depends on pyridoxal 5'-phosphate as a cofactor.

The protein resides in the cytoplasm. It carries out the reaction (S)-4-amino-5-oxopentanoate = 5-aminolevulinate. Its pathway is porphyrin-containing compound metabolism; protoporphyrin-IX biosynthesis; 5-aminolevulinate from L-glutamyl-tRNA(Glu): step 2/2. This is Glutamate-1-semialdehyde 2,1-aminomutase 2 from Anoxybacillus flavithermus (strain DSM 21510 / WK1).